The sequence spans 143 residues: Large ribosomal subunit protein uL11 (143 aa).

Belongs to the universal ribosomal protein uL11 family. In terms of assembly, part of the ribosomal stalk of the 50S ribosomal subunit. Interacts with L10 and the large rRNA to form the base of the stalk. L10 forms an elongated spine to which L12 dimers bind in a sequential fashion forming a multimeric L10(L12)X complex. In terms of processing, one or more lysine residues are methylated.

Forms part of the ribosomal stalk which helps the ribosome interact with GTP-bound translation factors. In Rhizobium rhizogenes (strain K84 / ATCC BAA-868) (Agrobacterium radiobacter), this protein is Large ribosomal subunit protein uL11.